Reading from the N-terminus, the 247-residue chain is NAD(P)H-quinone oxidoreductase subunit K, chloroplastic (247 aa).

Positions 61, 62, 126, and 157 each coordinate [4Fe-4S] cluster.

The protein belongs to the complex I 20 kDa subunit family. NDH is composed of at least 16 different subunits, 5 of which are encoded in the nucleus. Requires [4Fe-4S] cluster as cofactor.

It is found in the plastid. The protein resides in the chloroplast thylakoid membrane. It carries out the reaction a plastoquinone + NADH + (n+1) H(+)(in) = a plastoquinol + NAD(+) + n H(+)(out). The catalysed reaction is a plastoquinone + NADPH + (n+1) H(+)(in) = a plastoquinol + NADP(+) + n H(+)(out). Its function is as follows. NDH shuttles electrons from NAD(P)H:plastoquinone, via FMN and iron-sulfur (Fe-S) centers, to quinones in the photosynthetic chain and possibly in a chloroplast respiratory chain. The immediate electron acceptor for the enzyme in this species is believed to be plastoquinone. Couples the redox reaction to proton translocation, and thus conserves the redox energy in a proton gradient. In Anthoceros angustus (Hornwort), this protein is NAD(P)H-quinone oxidoreductase subunit K, chloroplastic.